Here is a 250-residue protein sequence, read N- to C-terminus: tRNA (guanine-N(1)-)-methyltransferase (250 aa).

S-adenosyl-L-methionine-binding positions include Gly116 and 136 to 141 (IGDYVL).

The protein belongs to the RNA methyltransferase TrmD family. As to quaternary structure, homodimer.

It is found in the cytoplasm. The catalysed reaction is guanosine(37) in tRNA + S-adenosyl-L-methionine = N(1)-methylguanosine(37) in tRNA + S-adenosyl-L-homocysteine + H(+). Specifically methylates guanosine-37 in various tRNAs. The sequence is that of tRNA (guanine-N(1)-)-methyltransferase from Pseudomonas fluorescens (strain ATCC BAA-477 / NRRL B-23932 / Pf-5).